The following is a 324-amino-acid chain: Acetyl-coenzyme A carboxylase carboxyl transferase subunit alpha (324 aa).

The CoA carboxyltransferase C-terminal domain maps to 37 to 291 (KLERRLDKLK…RDFILREWLR (255 aa)).

This sequence belongs to the AccA family. In terms of assembly, acetyl-CoA carboxylase is a heterohexamer composed of biotin carboxyl carrier protein (AccB), biotin carboxylase (AccC) and two subunits each of ACCase subunit alpha (AccA) and ACCase subunit beta (AccD).

The protein localises to the cytoplasm. The enzyme catalyses N(6)-carboxybiotinyl-L-lysyl-[protein] + acetyl-CoA = N(6)-biotinyl-L-lysyl-[protein] + malonyl-CoA. It participates in lipid metabolism; malonyl-CoA biosynthesis; malonyl-CoA from acetyl-CoA: step 1/1. In terms of biological role, component of the acetyl coenzyme A carboxylase (ACC) complex. First, biotin carboxylase catalyzes the carboxylation of biotin on its carrier protein (BCCP) and then the CO(2) group is transferred by the carboxyltransferase to acetyl-CoA to form malonyl-CoA. The protein is Acetyl-coenzyme A carboxylase carboxyl transferase subunit alpha of Chlamydia abortus (strain DSM 27085 / S26/3) (Chlamydophila abortus).